A 62-amino-acid polypeptide reads, in one-letter code: Photosystem II reaction center protein Z (62 aa).

Helical transmembrane passes span 8–28 (AVFA…VVFA) and 41–61 (FSGT…NSLI).

It belongs to the PsbZ family. As to quaternary structure, PSII is composed of 1 copy each of membrane proteins PsbA, PsbB, PsbC, PsbD, PsbE, PsbF, PsbH, PsbI, PsbJ, PsbK, PsbL, PsbM, PsbT, PsbY, PsbZ, Psb30/Ycf12, at least 3 peripheral proteins of the oxygen-evolving complex and a large number of cofactors. It forms dimeric complexes.

It is found in the plastid. The protein resides in the chloroplast thylakoid membrane. In terms of biological role, may control the interaction of photosystem II (PSII) cores with the light-harvesting antenna, regulates electron flow through the 2 photosystem reaction centers. PSII is a light-driven water plastoquinone oxidoreductase, using light energy to abstract electrons from H(2)O, generating a proton gradient subsequently used for ATP formation. This is Photosystem II reaction center protein Z from Piper cenocladum (Ant piper).